The following is a 122-amino-acid chain: Prefoldin subunit 1 (122 aa).

A2 carries the post-translational modification N-acetylalanine.

The protein belongs to the prefoldin subunit beta family. As to quaternary structure, heterohexamer of two PFD-alpha type and four PFD-beta type subunits.

Binds specifically to cytosolic chaperonin (c-CPN) and transfers target proteins to it. Binds to nascent polypeptide chain and promotes folding in an environment in which there are many competing pathways for nonnative proteins. In Mus musculus (Mouse), this protein is Prefoldin subunit 1 (Pfdn1).